We begin with the raw amino-acid sequence, 586 residues long: CTP synthase (586 aa).

The interval 1 to 278 (MRKHPQTATK…DAFVVRRLNL (278 aa)) is amidoligase domain. Serine 20 is a CTP binding site. A UTP-binding site is contributed by serine 20. Residues 21–26 (SLGKGL) and aspartate 78 each bind ATP. Mg(2+) is bound by residues aspartate 78 and glutamate 152. Residues 159 to 161 (DIE), 199 to 204 (KTKPTQ), and lysine 235 each bind CTP. Residues 199 to 204 (KTKPTQ) and lysine 235 each bind UTP. The 249-residue stretch at 303–551 (RIALVGKYVE…VGAAIDYKAG (249 aa)) folds into the Glutamine amidotransferase type-1 domain. Residue glycine 366 participates in L-glutamine binding. Cysteine 393 acts as the Nucleophile; for glutamine hydrolysis in catalysis. L-glutamine-binding positions include 394-397 (LGLQ), glutamate 416, and arginine 477. Active-site residues include histidine 524 and glutamate 526. The segment at 560-586 (EIPEHTPNGSSHRDGVGQPLPEPASRG) is disordered.

It belongs to the CTP synthase family. In terms of assembly, homotetramer.

The catalysed reaction is UTP + L-glutamine + ATP + H2O = CTP + L-glutamate + ADP + phosphate + 2 H(+). It catalyses the reaction L-glutamine + H2O = L-glutamate + NH4(+). The enzyme catalyses UTP + NH4(+) + ATP = CTP + ADP + phosphate + 2 H(+). The protein operates within pyrimidine metabolism; CTP biosynthesis via de novo pathway; CTP from UDP: step 2/2. Its activity is regulated as follows. Allosterically activated by GTP, when glutamine is the substrate; GTP has no effect on the reaction when ammonia is the substrate. The allosteric effector GTP functions by stabilizing the protein conformation that binds the tetrahedral intermediate(s) formed during glutamine hydrolysis. Inhibited by the product CTP, via allosteric rather than competitive inhibition. Its function is as follows. Catalyzes the ATP-dependent amination of UTP to CTP with either L-glutamine or ammonia as the source of nitrogen. Regulates intracellular CTP levels through interactions with the four ribonucleotide triphosphates. This chain is CTP synthase, found in Mycobacterium tuberculosis (strain ATCC 25177 / H37Ra).